Here is a 165-residue protein sequence, read N- to C-terminus: Peptide methionine sulfoxide reductase MsrA (165 aa).

C10 is an active-site residue.

The protein belongs to the MsrA Met sulfoxide reductase family.

The catalysed reaction is L-methionyl-[protein] + [thioredoxin]-disulfide + H2O = L-methionyl-(S)-S-oxide-[protein] + [thioredoxin]-dithiol. It catalyses the reaction [thioredoxin]-disulfide + L-methionine + H2O = L-methionine (S)-S-oxide + [thioredoxin]-dithiol. In terms of biological role, has an important function as a repair enzyme for proteins that have been inactivated by oxidation. Catalyzes the reversible oxidation-reduction of methionine sulfoxide in proteins to methionine. This chain is Peptide methionine sulfoxide reductase MsrA, found in Campylobacter jejuni (strain RM1221).